Reading from the N-terminus, the 62-residue chain is Photosystem II reaction center protein Z (62 aa).

Helical transmembrane passes span 8–28 (ALIS…VAYA) and 41–61 (WLGS…NFFV).

This sequence belongs to the PsbZ family. In terms of assembly, PSII is composed of 1 copy each of membrane proteins PsbA, PsbB, PsbC, PsbD, PsbE, PsbF, PsbH, PsbI, PsbJ, PsbK, PsbL, PsbM, PsbT, PsbX, PsbY, PsbZ, Psb30/Ycf12, peripheral proteins PsbO, CyanoQ (PsbQ), PsbU, PsbV and a large number of cofactors. It forms dimeric complexes.

It localises to the cellular thylakoid membrane. Its function is as follows. May control the interaction of photosystem II (PSII) cores with the light-harvesting antenna, regulates electron flow through the 2 photosystem reaction centers. PSII is a light-driven water plastoquinone oxidoreductase, using light energy to abstract electrons from H(2)O, generating a proton gradient subsequently used for ATP formation. This is Photosystem II reaction center protein Z from Trichormus variabilis (strain ATCC 29413 / PCC 7937) (Anabaena variabilis).